The following is a 198-amino-acid chain: Large ribosomal subunit protein bL25 (198 aa).

It belongs to the bacterial ribosomal protein bL25 family. CTC subfamily. As to quaternary structure, part of the 50S ribosomal subunit; part of the 5S rRNA/L5/L18/L25 subcomplex. Contacts the 5S rRNA. Binds to the 5S rRNA independently of L5 and L18.

This is one of the proteins that binds to the 5S RNA in the ribosome where it forms part of the central protuberance. The polypeptide is Large ribosomal subunit protein bL25 (Bordetella avium (strain 197N)).